The primary structure comprises 181 residues: ATP synthase subunit b (181 aa).

A helical transmembrane segment spans residues 23-43 (FIHIPTFIYTALNLVILYFIL).

It belongs to the ATPase B chain family. In terms of assembly, F-type ATPases have 2 components, F(1) - the catalytic core - and F(0) - the membrane proton channel. F(1) has five subunits: alpha(3), beta(3), gamma(1), delta(1), epsilon(1). F(0) has three main subunits: a(1), b(2) and c(10-14). The alpha and beta chains form an alternating ring which encloses part of the gamma chain. F(1) is attached to F(0) by a central stalk formed by the gamma and epsilon chains, while a peripheral stalk is formed by the delta and b chains.

It is found in the cell membrane. Functionally, f(1)F(0) ATP synthase produces ATP from ADP in the presence of a proton or sodium gradient. F-type ATPases consist of two structural domains, F(1) containing the extramembraneous catalytic core and F(0) containing the membrane proton channel, linked together by a central stalk and a peripheral stalk. During catalysis, ATP synthesis in the catalytic domain of F(1) is coupled via a rotary mechanism of the central stalk subunits to proton translocation. Component of the F(0) channel, it forms part of the peripheral stalk, linking F(1) to F(0). The polypeptide is ATP synthase subunit b (Acetivibrio thermocellus (strain ATCC 27405 / DSM 1237 / JCM 9322 / NBRC 103400 / NCIMB 10682 / NRRL B-4536 / VPI 7372) (Clostridium thermocellum)).